The sequence spans 241 residues: Interleukin-6 (241 aa).

The first 26 residues, 1 to 26, serve as a signal peptide directing secretion; sequence MNSFTSALRPGPLGCSLALLLVVATA. The interval 32-51 is disordered; sequence PVREDSNTKASPDKTLTPPG. Cystine bridges form between cysteine 72/cysteine 78 and cysteine 101/cysteine 111. N-linked (GlcNAc...) asparagine glycosylation is present at asparagine 108.

It belongs to the IL-6 superfamily. As to quaternary structure, component of a hexamer of two molecules each of IL6, IL6R and IL6ST; first binds to IL6R to associate with the signaling subunit IL6ST. Interacts with IL6R (via the N-terminal ectodomain); this interaction may be affected by IL6R-binding with SORL1, hence decreasing IL6 cis signaling. Interacts with SORL1 (via the N-terminal ectodomain); this interaction leads to IL6 internalization and lysosomal degradation. May form a trimeric complex with the soluble SORL1 ectodomain and soluble IL6R receptor; this interaction might stabilize circulating IL6, hence promoting IL6 trans signaling.

It localises to the secreted. Its function is as follows. Cytokine with a wide variety of biological functions in immunity, tissue regeneration, and metabolism. Binds to IL6R, then the complex associates to the signaling subunit IL6ST/gp130 to trigger the intracellular IL6-signaling pathway. The interaction with the membrane-bound IL6R and IL6ST stimulates 'classic signaling', whereas the binding of IL6 and soluble IL6R to IL6ST stimulates 'trans-signaling'. Alternatively, 'cluster signaling' occurs when membrane-bound IL6:IL6R complexes on transmitter cells activate IL6ST receptors on neighboring receiver cells. Functionally, IL6 is a potent inducer of the acute phase response. Rapid production of IL6 contributes to host defense during infection and tissue injury, but excessive IL6 synthesis is involved in disease pathology. In the innate immune response, is synthesized by myeloid cells, such as macrophages and dendritic cells, upon recognition of pathogens through toll-like receptors (TLRs) at the site of infection or tissue injury. In the adaptive immune response, is required for the differentiation of B cells into immunoglobulin-secreting cells. Plays a major role in the differentiation of CD4(+) T cell subsets. Essential factor for the development of T follicular helper (Tfh) cells that are required for the induction of germinal-center formation. Required to drive naive CD4(+) T cells to the Th17 lineage. Also required for proliferation of myeloma cells and the survival of plasmablast cells. Acts as an essential factor in bone homeostasis and on vessels directly or indirectly by induction of VEGF, resulting in increased angiogenesis activity and vascular permeability. Induces, through 'trans-signaling' and synergistically with IL1B and TNF, the production of VEGF. Involved in metabolic controls, is discharged into the bloodstream after muscle contraction increasing lipolysis and improving insulin resistance. 'Trans-signaling' in central nervous system also regulates energy and glucose homeostasis. Mediates, through GLP-1, crosstalk between insulin-sensitive tissues, intestinal L cells and pancreatic islets to adapt to changes in insulin demand. Also acts as a myokine. Plays a protective role during liver injury, being required for maintenance of tissue regeneration. Also has a pivotal role in iron metabolism by regulating HAMP/hepcidin expression upon inflammation or bacterial infection. Through activation of IL6ST-YAP-NOTCH pathway, induces inflammation-induced epithelial regeneration. This is Interleukin-6 (IL6) from Oryctolagus cuniculus (Rabbit).